A 334-amino-acid chain; its full sequence is Malate dehydrogenase (334 aa).

Position 16-22 (16-22) interacts with NAD(+); it reads GAAGQIA. 2 residues coordinate substrate: Arg97 and Arg103. Residues Asn110, Gln117, and 134 to 136 each bind NAD(+); that span reads VGN. Residues Asn136 and Arg167 each coordinate substrate. The active-site Proton acceptor is His192.

The protein belongs to the LDH/MDH superfamily. MDH type 2 family.

The enzyme catalyses (S)-malate + NAD(+) = oxaloacetate + NADH + H(+). Functionally, catalyzes the reversible oxidation of malate to oxaloacetate. The sequence is that of Malate dehydrogenase from Nocardia farcinica (strain IFM 10152).